The chain runs to 228 residues: L-ribulose-5-phosphate 4-epimerase UlaF (228 aa).

Residues 26–27, 43–44, and 72–73 contribute to the substrate site; these read GN, SG, and SS. Positions 74, 93, and 95 each coordinate Zn(2+). Catalysis depends on Asp-118, which acts as the Proton donor/acceptor. Residue His-167 coordinates Zn(2+). The active-site Proton donor/acceptor is the Tyr-225.

This sequence belongs to the aldolase class II family. AraD/FucA subfamily. It depends on Zn(2+) as a cofactor.

It carries out the reaction L-ribulose 5-phosphate = D-xylulose 5-phosphate. It functions in the pathway cofactor degradation; L-ascorbate degradation; D-xylulose 5-phosphate from L-ascorbate: step 4/4. In terms of biological role, catalyzes the isomerization of L-ribulose 5-phosphate to D-xylulose 5-phosphate. Is involved in the anaerobic L-ascorbate utilization. In Shigella flexneri, this protein is L-ribulose-5-phosphate 4-epimerase UlaF.